Consider the following 186-residue polypeptide: Elongation factor P (186 aa).

The protein belongs to the elongation factor P family.

It is found in the cytoplasm. The protein operates within protein biosynthesis; polypeptide chain elongation. Functionally, involved in peptide bond synthesis. Stimulates efficient translation and peptide-bond synthesis on native or reconstituted 70S ribosomes in vitro. Probably functions indirectly by altering the affinity of the ribosome for aminoacyl-tRNA, thus increasing their reactivity as acceptors for peptidyl transferase. The polypeptide is Elongation factor P (Polynucleobacter necessarius subsp. necessarius (strain STIR1)).